The primary structure comprises 313 residues: Thymidylate synthase (313 aa).

A disordered region spans residues 1–28; the sequence is MPVAGSELPRRPLPPAAQERDAEPRPPH. Over residues 18-28 the composition is skewed to basic and acidic residues; sequence QERDAEPRPPH. A dUMP-binding site is contributed by Arg50. Ser114 is subject to Phosphoserine. DUMP is bound by residues 175–176, 195–196, 215–218, Asn226, and 256–258; these read RR, CH, RSGD, and HIY. Residue Cys195 is the Nucleophile of the active site. A (6R)-5,10-methylene-5,6,7,8-tetrahydrofolate-binding site is contributed by Asp218. Glycyl lysine isopeptide (Lys-Gly) (interchain with G-Cter in SUMO2) cross-links involve residues Lys287, Lys292, and Lys308. Residue Ala312 coordinates (6R)-5,10-methylene-5,6,7,8-tetrahydrofolate.

The protein belongs to the thymidylate synthase family. Homodimer.

It localises to the nucleus. The protein resides in the cytoplasm. The protein localises to the mitochondrion. Its subcellular location is the mitochondrion matrix. It is found in the mitochondrion inner membrane. It carries out the reaction dUMP + (6R)-5,10-methylene-5,6,7,8-tetrahydrofolate = 7,8-dihydrofolate + dTMP. It participates in pyrimidine metabolism; dTTP biosynthesis. Functionally, catalyzes the reductive methylation of 2'-deoxyuridine 5'-monophosphate (dUMP) to thymidine 5'-monophosphate (dTMP), using the cosubstrate, 5,10- methylenetetrahydrofolate (CH2H4folate) as a 1-carbon donor and reductant and contributes to the de novo mitochondrial thymidylate biosynthesis pathway. In Homo sapiens (Human), this protein is Thymidylate synthase.